The sequence spans 396 residues: Protein BOP3 (396 aa).

Disordered stretches follow at residues 1-22 (MSTF…NNVN), 98-126 (GVPA…ENLP), 145-168 (PTPM…GISH), 203-239 (VARR…KFTN), 254-274 (RDQQ…QQDL), and 355-396 (REGR…LNST). 3 stretches are compositionally biased toward polar residues: residues 111 to 124 (QPHN…SSEN), 159 to 168 (ASSSTGGISH), and 210 to 230 (GTKS…SRNL). Basic and acidic residues predominate over residues 355–369 (REGRQVHDDLDDRTC). The span at 370–396 (SESSSRNESPVRTITKDNSVGKILNST) shows a compositional bias: polar residues.

Its subcellular location is the cytoplasm. The protein resides in the nucleus. Involved in resistance to methylmercury. Overexpression suppresses a PAM1-SLV3 double null mutation. This is Protein BOP3 (BOP3) from Saccharomyces cerevisiae (strain ATCC 204508 / S288c) (Baker's yeast).